Reading from the N-terminus, the 107-residue chain is UPF0145 protein Spro_1658 (107 aa).

Belongs to the UPF0145 family.

This chain is UPF0145 protein Spro_1658, found in Serratia proteamaculans (strain 568).